We begin with the raw amino-acid sequence, 49 residues long: Large ribosomal subunit protein bL33B (49 aa).

This sequence belongs to the bacterial ribosomal protein bL33 family.

In Bacillus cytotoxicus (strain DSM 22905 / CIP 110041 / 391-98 / NVH 391-98), this protein is Large ribosomal subunit protein bL33B.